We begin with the raw amino-acid sequence, 237 residues long: Putative N-acetylmuramoyl-L-alanine amidase (237 aa).

Positions 7 to 225 (ILIDAGHGGY…IANSIYLGLK (219 aa)) constitute a MurNAc-LAA domain.

Belongs to the N-acetylmuramoyl-L-alanine amidase 3 family.

It localises to the secreted. It catalyses the reaction Hydrolyzes the link between N-acetylmuramoyl residues and L-amino acid residues in certain cell-wall glycopeptides.. In terms of biological role, cell-wall hydrolase involved in septum cleavage during cell division. This is Putative N-acetylmuramoyl-L-alanine amidase (amiB) from Buchnera aphidicola subsp. Acyrthosiphon pisum (strain APS) (Acyrthosiphon pisum symbiotic bacterium).